The following is an 86-amino-acid chain: Large ribosomal subunit protein bL31 (86 aa).

The segment at 65–86 (YRMASSDSSEQKDKSSEEKKES) is disordered. A compositionally biased stretch (basic and acidic residues) spans 73–86 (SEQKDKSSEEKKES).

This sequence belongs to the bacterial ribosomal protein bL31 family. Type A subfamily. In terms of assembly, part of the 50S ribosomal subunit.

Its function is as follows. Binds the 23S rRNA. The chain is Large ribosomal subunit protein bL31 from Prochlorococcus marinus (strain NATL1A).